A 372-amino-acid chain; its full sequence is Carbamoyl phosphate synthase small chain (372 aa).

Positions 1–186 are CPSase; it reads MTYCKRGTEG…IHQNNSPDII (186 aa). Residues Ser52, Gly233, and Gly235 each coordinate L-glutamine. Residues 185-372 form the Glutamine amidotransferase type-1 domain; sequence IIVLVDCGIK…KKMVIKDEGN (188 aa). Cys261 acts as the Nucleophile in catalysis. Residues Leu262, Gln265, Asn303, Gly305, and Tyr306 each contribute to the L-glutamine site. Active-site residues include His345 and Glu347.

Belongs to the CarA family. Composed of two chains; the small (or glutamine) chain promotes the hydrolysis of glutamine to ammonia, which is used by the large (or ammonia) chain to synthesize carbamoyl phosphate. Tetramer of heterodimers (alpha,beta)4.

The enzyme catalyses hydrogencarbonate + L-glutamine + 2 ATP + H2O = carbamoyl phosphate + L-glutamate + 2 ADP + phosphate + 2 H(+). It catalyses the reaction L-glutamine + H2O = L-glutamate + NH4(+). Its pathway is amino-acid biosynthesis; L-arginine biosynthesis; carbamoyl phosphate from bicarbonate: step 1/1. The protein operates within pyrimidine metabolism; UMP biosynthesis via de novo pathway; (S)-dihydroorotate from bicarbonate: step 1/3. In terms of biological role, small subunit of the glutamine-dependent carbamoyl phosphate synthetase (CPSase). CPSase catalyzes the formation of carbamoyl phosphate from the ammonia moiety of glutamine, carbonate, and phosphate donated by ATP, constituting the first step of 2 biosynthetic pathways, one leading to arginine and/or urea and the other to pyrimidine nucleotides. The small subunit (glutamine amidotransferase) binds and cleaves glutamine to supply the large subunit with the substrate ammonia. The chain is Carbamoyl phosphate synthase small chain from Metallosphaera sedula (strain ATCC 51363 / DSM 5348 / JCM 9185 / NBRC 15509 / TH2).